The sequence spans 516 residues: 2-isopropylmalate synthase (516 aa).

A Pyruvate carboxyltransferase domain is found at 5 to 268; the sequence is LIIFDTTLRD…DLGIDTTQIV (264 aa). Residues D14, H202, H204, and N239 each contribute to the Mn(2+) site. The segment at 395–516 is regulatory domain; that stretch reads KFVSLSQHSE…DKLNPQRADI (122 aa).

It belongs to the alpha-IPM synthase/homocitrate synthase family. LeuA type 1 subfamily. As to quaternary structure, homodimer. It depends on Mn(2+) as a cofactor.

The protein resides in the cytoplasm. It catalyses the reaction 3-methyl-2-oxobutanoate + acetyl-CoA + H2O = (2S)-2-isopropylmalate + CoA + H(+). Its pathway is amino-acid biosynthesis; L-leucine biosynthesis; L-leucine from 3-methyl-2-oxobutanoate: step 1/4. In terms of biological role, catalyzes the condensation of the acetyl group of acetyl-CoA with 3-methyl-2-oxobutanoate (2-ketoisovalerate) to form 3-carboxy-3-hydroxy-4-methylpentanoate (2-isopropylmalate). This is 2-isopropylmalate synthase from Paraburkholderia phymatum (strain DSM 17167 / CIP 108236 / LMG 21445 / STM815) (Burkholderia phymatum).